The sequence spans 1040 residues: Isoleucine--tRNA ligase (1040 aa).

The 'HIGH' region signature appears at Pro47–Thr57. A 'KMSKS' region motif is present at residues Lys605 to Ser609. Lys608 lines the ATP pocket.

It belongs to the class-I aminoacyl-tRNA synthetase family. IleS type 2 subfamily. As to quaternary structure, monomer. Zn(2+) is required as a cofactor.

It localises to the cytoplasm. It carries out the reaction tRNA(Ile) + L-isoleucine + ATP = L-isoleucyl-tRNA(Ile) + AMP + diphosphate. Its function is as follows. Catalyzes the attachment of isoleucine to tRNA(Ile). As IleRS can inadvertently accommodate and process structurally similar amino acids such as valine, to avoid such errors it has two additional distinct tRNA(Ile)-dependent editing activities. One activity is designated as 'pretransfer' editing and involves the hydrolysis of activated Val-AMP. The other activity is designated 'posttransfer' editing and involves deacylation of mischarged Val-tRNA(Ile). This chain is Isoleucine--tRNA ligase, found in Methanococcus aeolicus (strain ATCC BAA-1280 / DSM 17508 / OCM 812 / Nankai-3).